The following is a 56-amino-acid chain: EECGPNEVFNTCGSACAPTCAQPKTRICTMQCRIGCQCQEGFLRNGEGACVLPENC.

5 disulfides stabilise this stretch: cysteine 3-cysteine 36, cysteine 12-cysteine 32, cysteine 16-cysteine 28, cysteine 20-cysteine 56, and cysteine 38-cysteine 50. The region spanning 3 to 56 (CGPNEVFNTCGSACAPTCAQPKTRICTMQCRIGCQCQEGFLRNGEGACVLPENC) is the TIL domain.

The protein belongs to the serine protease inhibitor-like (TIL domain-containing) family.

It is found in the secreted. Chymotrypsin and cathepsin G inhibitor. This chain is Chymotrypsin inhibitor, found in Apis mellifera (Honeybee).